The following is a 565-amino-acid chain: NAD-dependent malic enzyme (565 aa).

Residue Y104 is the Proton donor of the active site. Residue R157 coordinates NAD(+). The Proton acceptor role is filled by K175. E246, D247, and D270 together coordinate a divalent metal cation. Positions 270 and 418 each coordinate NAD(+).

Belongs to the malic enzymes family. Homotetramer. It depends on Mg(2+) as a cofactor. Mn(2+) serves as cofactor.

It carries out the reaction (S)-malate + NAD(+) = pyruvate + CO2 + NADH. The enzyme catalyses oxaloacetate + H(+) = pyruvate + CO2. This chain is NAD-dependent malic enzyme, found in Shigella flexneri serotype 5b (strain 8401).